The primary structure comprises 382 residues: Lipid-A-disaccharide synthase (382 aa).

The protein belongs to the LpxB family.

It catalyses the reaction 2-N,3-O-bis[(3R)-3-hydroxytetradecanoyl]-alpha-D-glucosaminyl 1-phosphate + UDP-2-N,3-O-bis[(3R)-3-hydroxytetradecanoyl]-alpha-D-glucosamine = lipid A disaccharide (E. coli) + UDP + H(+). It carries out the reaction a lipid X + a UDP-2-N,3-O-bis[(3R)-3-hydroxyacyl]-alpha-D-glucosamine = a lipid A disaccharide + UDP + H(+). It participates in glycolipid biosynthesis; lipid IV(A) biosynthesis; lipid IV(A) from (3R)-3-hydroxytetradecanoyl-[acyl-carrier-protein] and UDP-N-acetyl-alpha-D-glucosamine: step 5/6. Condensation of UDP-2,3-diacylglucosamine and 2,3-diacylglucosamine-1-phosphate to form lipid A disaccharide, a precursor of lipid A, a phosphorylated glycolipid that anchors the lipopolysaccharide to the outer membrane of the cell. The polypeptide is Lipid-A-disaccharide synthase (Salmonella arizonae (strain ATCC BAA-731 / CDC346-86 / RSK2980)).